Consider the following 404-residue polypeptide: Cysteine desulfurase IscS (404 aa).

Residues 75-76 (AT), Asn155, Gln183, and 203-205 (SAH) each bind pyridoxal 5'-phosphate. Lys206 carries the post-translational modification N6-(pyridoxal phosphate)lysine. Residue Thr243 coordinates pyridoxal 5'-phosphate. The Cysteine persulfide intermediate role is filled by Cys328. Cys328 lines the [2Fe-2S] cluster pocket.

Belongs to the class-V pyridoxal-phosphate-dependent aminotransferase family. NifS/IscS subfamily. In terms of assembly, homodimer. Forms a heterotetramer with IscU, interacts with other sulfur acceptors. It depends on pyridoxal 5'-phosphate as a cofactor.

Its subcellular location is the cytoplasm. It catalyses the reaction (sulfur carrier)-H + L-cysteine = (sulfur carrier)-SH + L-alanine. Its pathway is cofactor biosynthesis; iron-sulfur cluster biosynthesis. In terms of biological role, master enzyme that delivers sulfur to a number of partners involved in Fe-S cluster assembly, tRNA modification or cofactor biosynthesis. Catalyzes the removal of elemental sulfur atoms from cysteine to produce alanine. Functions as a sulfur delivery protein for Fe-S cluster synthesis onto IscU, an Fe-S scaffold assembly protein, as well as other S acceptor proteins. This chain is Cysteine desulfurase IscS, found in Buchnera aphidicola subsp. Schizaphis graminum (strain Sg).